The chain runs to 46 residues: MRLHTGEKPYQCLHCDRHFVQVANLRRHLRVHTGERPYACEICPSR.

3 consecutive C2H2-type zinc fingers follow at residues 1 to 4, 10 to 32, and 38 to 46; these read MRLH, YQCL…LRVH, and YACEICPSR.

This sequence belongs to the krueppel C2H2-type zinc-finger protein family.

The protein resides in the nucleus. Krueppel is a gap class segmentation protein. This chain is Protein krueppel (Kr), found in Pholcus phalangioides (Longbodied cellar spider).